The following is a 62-amino-acid chain: Defensin BmKDfsin6 (62 aa).

An N-terminal signal peptide occupies residues 1 to 24; the sequence is MKVIAILFLLAFVLCTMEITMVEA. Disulfide bonds link Cys-28-Cys-49, Cys-35-Cys-57, and Cys-39-Cys-59.

Belongs to the invertebrate defensin family. Type 2 subfamily. Highly expressed in non-venom gland (hemolymph) and moderately expressed in venom gland.

It localises to the secreted. Its function is as follows. Antibacterial peptide active against Gram-positive bacteria, but not on Gram-negative bacteria. Also has weak blocking activity on Kv1.1/KCNA1, Kv1.2/KCNA2, Kv1.3/KCNA3, KCa3.1/KCNN4/IK, KCa2.3/KCNN3/SK3 and Kv11.1/KCNH2/ERG1 channels (tested at 1 uM). It inhibits potassium channel current by interacting with the pore region. The polypeptide is Defensin BmKDfsin6 (Olivierus martensii (Manchurian scorpion)).